Here is a 147-residue protein sequence, read N- to C-terminus: Nucleoside diphosphate kinase (147 aa).

K9, F57, R85, T91, R102, and N112 together coordinate ATP. H115 acts as the Pros-phosphohistidine intermediate in catalysis.

It belongs to the NDK family. Homotetramer. It depends on Mg(2+) as a cofactor.

The protein localises to the cytoplasm. The enzyme catalyses a 2'-deoxyribonucleoside 5'-diphosphate + ATP = a 2'-deoxyribonucleoside 5'-triphosphate + ADP. The catalysed reaction is a ribonucleoside 5'-diphosphate + ATP = a ribonucleoside 5'-triphosphate + ADP. Functionally, major role in the synthesis of nucleoside triphosphates other than ATP. The ATP gamma phosphate is transferred to the NDP beta phosphate via a ping-pong mechanism, using a phosphorylated active-site intermediate. This Listeria monocytogenes serotype 4b (strain F2365) protein is Nucleoside diphosphate kinase.